Consider the following 105-residue polypeptide: Small ribosomal subunit protein uS10 (105 aa).

Belongs to the universal ribosomal protein uS10 family. In terms of assembly, part of the 30S ribosomal subunit.

Involved in the binding of tRNA to the ribosomes. This Francisella tularensis subsp. mediasiatica (strain FSC147) protein is Small ribosomal subunit protein uS10.